We begin with the raw amino-acid sequence, 312 residues long: Protein phosphatase PTC7 homolog fig (312 aa).

The 265-residue stretch at 42–306 (IQGSSKDQLA…DDITVILASV (265 aa)) folds into the PPM-type phosphatase domain. The Mn(2+) site is built by aspartate 83, glycine 84, and aspartate 228.

This sequence belongs to the PP2C family. It depends on Mg(2+) as a cofactor. Mn(2+) serves as cofactor.

It catalyses the reaction O-phospho-L-seryl-[protein] + H2O = L-seryl-[protein] + phosphate. It carries out the reaction O-phospho-L-threonyl-[protein] + H2O = L-threonyl-[protein] + phosphate. The sequence is that of Protein phosphatase PTC7 homolog fig from Drosophila mojavensis (Fruit fly).